Here is a 152-residue protein sequence, read N- to C-terminus: Transcriptional regulator MraZ (152 aa).

SpoVT-AbrB domains lie at 5–52 and 81–124; these read ASAI…PLHE and AQDC…EESA.

This sequence belongs to the MraZ family. Forms oligomers.

The protein resides in the cytoplasm. It is found in the nucleoid. The polypeptide is Transcriptional regulator MraZ (Shewanella frigidimarina (strain NCIMB 400)).